The primary structure comprises 315 residues: DNA-directed RNA polymerase subunit alpha (315 aa).

Residues Met-1–Asn-227 form an alpha N-terminal domain (alpha-NTD) region. Residues Glu-239–Asn-315 are alpha C-terminal domain (alpha-CTD).

It belongs to the RNA polymerase alpha chain family. In terms of assembly, in plastids the minimal PEP RNA polymerase catalytic core is composed of four subunits: alpha, beta, beta', and beta''. When a (nuclear-encoded) sigma factor is associated with the core the holoenzyme is formed, which can initiate transcription.

The protein localises to the plastid. Its subcellular location is the cyanelle. The enzyme catalyses RNA(n) + a ribonucleoside 5'-triphosphate = RNA(n+1) + diphosphate. Its function is as follows. DNA-dependent RNA polymerase catalyzes the transcription of DNA into RNA using the four ribonucleoside triphosphates as substrates. The protein is DNA-directed RNA polymerase subunit alpha of Cyanophora paradoxa.